The sequence spans 770 residues: Nucleus-vacuole junction protein 2 (770 aa).

Residues 1–5 (MASLK) lie on the Cytoplasmic side of the membrane. Residues 6-26 (VFLAVYLLGGITFLPLVLFTL) traverse the membrane as a helical; Signal-anchor for type II membrane protein segment. Residues 27–770 (YKIHLLYSNL…EFEEQREPKL (744 aa)) are Lumenal-facing. One can recognise a PH domain in the interval 114-266 (TALQEQILQR…WYYQLINASK (153 aa)). N-linked (GlcNAc...) asparagine glycosylation is found at asparagine 228, asparagine 263, asparagine 279, asparagine 300, asparagine 391, asparagine 528, and asparagine 529. Residues 304–504 (NQLTTKWLNA…YPTPNEVYRG (201 aa)) form the SMP-LTD domain. Disordered regions lie at residues 541–566 (EGGM…LKDL), 578–600 (TQTT…TKSR), and 615–770 (KDNV…EPKL). Positions 554 to 566 (LRPERKKENLKDL) are enriched in basic and acidic residues. The span at 587–596 (NDDVSSSENS) shows a compositional bias: polar residues. N-linked (GlcNAc...) asparagine glycosylation is found at asparagine 595 and asparagine 620. Phosphoserine occurs at positions 640 and 669. Basic and acidic residues predominate over residues 679-688 (LEGRKEKDTE). Asparagine 700 is a glycosylation site (N-linked (GlcNAc...) asparagine). 2 stretches are compositionally biased toward polar residues: residues 713–725 (FSVS…NSLK) and 736–751 (LESS…QNRF). Serine 717 carries the post-translational modification Phosphoserine. An N-linked (GlcNAc...) asparagine glycan is attached at asparagine 718. Phosphoserine is present on residues serine 720 and serine 723. A compositionally biased stretch (basic and acidic residues) spans 756-770 (FKQDLEFEEQREPKL).

The protein resides in the endoplasmic reticulum membrane. Its subcellular location is the nucleus membrane. In terms of biological role, during endoplasmic reticulum (ER) stress or when cellular ceramide levels increase, induces contacts between the ER and medial-Golgi complex to facilitate non-vesicular transport of ceramides from the ER to the Golgi complex where they are converted to complex sphingolipids, preventing toxic ceramide accumulation. The protein is Nucleus-vacuole junction protein 2 of Saccharomyces cerevisiae (strain ATCC 204508 / S288c) (Baker's yeast).